We begin with the raw amino-acid sequence, 179 residues long: Large ribosomal subunit protein uL5 (179 aa).

Belongs to the universal ribosomal protein uL5 family. In terms of assembly, part of the 50S ribosomal subunit; part of the 5S rRNA/L5/L18/L25 subcomplex. Contacts the 5S rRNA and the P site tRNA. Forms a bridge to the 30S subunit in the 70S ribosome.

Functionally, this is one of the proteins that bind and probably mediate the attachment of the 5S RNA into the large ribosomal subunit, where it forms part of the central protuberance. In the 70S ribosome it contacts protein S13 of the 30S subunit (bridge B1b), connecting the 2 subunits; this bridge is implicated in subunit movement. Contacts the P site tRNA; the 5S rRNA and some of its associated proteins might help stabilize positioning of ribosome-bound tRNAs. The protein is Large ribosomal subunit protein uL5 of Clostridium botulinum (strain Alaska E43 / Type E3).